A 475-amino-acid chain; its full sequence is Putative F-box protein At1g46840 (475 aa).

Residues 25 to 71 form the F-box domain; sequence TYVLEKLHIDLVIEILSRLSAKSIAICRCVSKQWNSLLVSQDFVESF. The span at 423–433 shows a compositional bias: low complexity; the sequence is SSYSTTRSYKS. The interval 423–475 is disordered; the sequence is SSYSTTRSYKSSGKRCSDRSIGEDEQDDIGEKRGDQAAERRERSTKRGKHEVH. Residues 451 to 464 show a composition bias toward basic and acidic residues; that stretch reads IGEKRGDQAAERRE. The span at 465–475 shows a compositional bias: basic residues; that stretch reads RSTKRGKHEVH.

The polypeptide is Putative F-box protein At1g46840 (Arabidopsis thaliana (Mouse-ear cress)).